We begin with the raw amino-acid sequence, 1279 residues long: ATP-dependent helicase/nuclease subunit A (1279 aa).

The region spanning T4–R499 is the UvrD-like helicase ATP-binding domain. A25–T32 contributes to the ATP binding site. One can recognise a UvrD-like helicase C-terminal domain in the interval E526–G853.

The protein belongs to the helicase family. AddA subfamily. Heterodimer of AddA and AddB/RexB. Requires Mg(2+) as cofactor.

It catalyses the reaction Couples ATP hydrolysis with the unwinding of duplex DNA by translocating in the 3'-5' direction.. The enzyme catalyses ATP + H2O = ADP + phosphate + H(+). The heterodimer acts as both an ATP-dependent DNA helicase and an ATP-dependent, dual-direction single-stranded exonuclease. Recognizes the chi site generating a DNA molecule suitable for the initiation of homologous recombination. The AddA nuclease domain is required for chi fragment generation; this subunit has the helicase and 3' -&gt; 5' nuclease activities. This Clostridium botulinum (strain Loch Maree / Type A3) protein is ATP-dependent helicase/nuclease subunit A.